A 729-amino-acid chain; its full sequence is Elongation factor 2 (729 aa).

A tr-type G domain is found at 19 to 262 (EQIRNIAIAA…MVCEHFPNPV (244 aa)). Residues 28-35 (AHVDHGKT), 94-98 (DTPGH), and 148-151 (NKVD) each bind GTP. His597 bears the Diphthamide mark.

Belongs to the TRAFAC class translation factor GTPase superfamily. Classic translation factor GTPase family. EF-G/EF-2 subfamily.

It is found in the cytoplasm. In terms of biological role, catalyzes the GTP-dependent ribosomal translocation step during translation elongation. During this step, the ribosome changes from the pre-translocational (PRE) to the post-translocational (POST) state as the newly formed A-site-bound peptidyl-tRNA and P-site-bound deacylated tRNA move to the P and E sites, respectively. Catalyzes the coordinated movement of the two tRNA molecules, the mRNA and conformational changes in the ribosome. This chain is Elongation factor 2, found in Natronomonas pharaonis (strain ATCC 35678 / DSM 2160 / CIP 103997 / JCM 8858 / NBRC 14720 / NCIMB 2260 / Gabara) (Halobacterium pharaonis).